The chain runs to 236 residues: MTKRYWNITFEEMMEAGVHFGHGTRKWNPKMAPYISMKRKGIHIINLTRTARFLSEACDLVFDAASRGKRFLIVGTKKKAADLVARAAIRARCHYVNKKWLGGMLTNWYTTETRLRKFRELRTEQKTGKLNCLPKRDAAILKRQLSHLETYLGGIKYMTGLPDIVIIVDQQEEYTALRECITLGIPTICLIDTNCDPDLADISIPANDDAIASIRLILNKLVFAICEGHSSYIRNF.

The protein belongs to the universal ribosomal protein uS2 family.

It localises to the plastid. The protein resides in the chloroplast. This chain is Small ribosomal subunit protein uS2c (rps2), found in Lotus japonicus (Lotus corniculatus var. japonicus).